The sequence spans 373 residues: Arfaptin-1 (373 aa).

The tract at residues 1-47 (MAQESPKNSAAEIPVTSNGEVDDAHEHGYNRDLKHSLPSGLGLSETQ) is disordered. A2 carries the N-acetylalanine modification. At S5 the chain carries Phosphoserine. Positions 22-35 (DDAHEHGYNRDLKH) are enriched in basic and acidic residues. Phosphoserine occurs at positions 36, 39, 69, 79, and 132. The AH domain maps to 153 to 353 (TVDLELEAQI…NQKQLELTLK (201 aa)). T361 is subject to Phosphothreonine.

Forms homodimers or heterodimers with ARFIP2. Interacts with non-myristoylated GTP-bound ARF3, but not to GDP-bound ARF3. Interacts with ARF1. Binds with lower affinity to ARF5 and with very little affinity to ARF6. Interacts with ARL1. Interacts with ATG9A. Phosphorylated by PRKD1; phosphorylation delocalizes ARFIP1 from the Golgi and disrupts its ability to inhibit the activity of ADP-ribosylation factor, an important component of the vesicle scission machinery.

The protein localises to the golgi apparatus. It localises to the trans-Golgi network membrane. In terms of biological role, plays a role in controlling biogenesis of secretory granules at the trans-Golgi network. Mechanistically, binds ARF-GTP at the neck of a growing secretory granule precursor and forms a protective scaffold. Once the granule precursor has been completely loaded, active PRKD1 phosphorylates ARFIP1 and releases it from ARFs. In turn, ARFs induce fission. Through this mechanism, ensures proper secretory granule formation at the Golgi of pancreatic beta cells. In Mus musculus (Mouse), this protein is Arfaptin-1.